The chain runs to 327 residues: MRNDIVKIVDRIIQGGRLSEAEGRSILQAGGASLGWVMAGAQQLRETYCGDGVGLCMIVNAKSGHCSEDCRFCAQSSHYHTGAPVFPLKTAEQIVAEAQCADSRGARCFGIVTSGARVLPGAELESILAALREIRETTRIAPSASLGLLDEETARALADAGCVTYHHNLETARSYFPHICTTHDYDQDLETVRVAKAAGMKVCCGGLFGLGETPEQRLELGLTLRELDIDSVPINFLNPVAGTPLADATPLEPMEALKIIALYRYLMPDRHITVCGGRGVTLGDFQSWIFQAGASGMMVGDYLTTAGRQLSDDLRMVTDAGLTYERC.

The Radical SAM core domain maps to 48 to 278 (YCGDGVGLCM…DRHITVCGGR (231 aa)). Residues C66, C70, and C73 each contribute to the [4Fe-4S] cluster site. Positions 143 and 203 each coordinate [2Fe-2S] cluster.

The protein belongs to the radical SAM superfamily. Biotin synthase family. In terms of assembly, homodimer. [4Fe-4S] cluster is required as a cofactor. It depends on [2Fe-2S] cluster as a cofactor.

The enzyme catalyses (4R,5S)-dethiobiotin + (sulfur carrier)-SH + 2 reduced [2Fe-2S]-[ferredoxin] + 2 S-adenosyl-L-methionine = (sulfur carrier)-H + biotin + 2 5'-deoxyadenosine + 2 L-methionine + 2 oxidized [2Fe-2S]-[ferredoxin]. Its pathway is cofactor biosynthesis; biotin biosynthesis; biotin from 7,8-diaminononanoate: step 2/2. Catalyzes the conversion of dethiobiotin (DTB) to biotin by the insertion of a sulfur atom into dethiobiotin via a radical-based mechanism. The polypeptide is Biotin synthase (Syntrophotalea carbinolica (strain DSM 2380 / NBRC 103641 / GraBd1) (Pelobacter carbinolicus)).